A 293-amino-acid chain; its full sequence is Diaminopimelate epimerase (293 aa).

Positions 11 and 78 each coordinate substrate. The active-site Proton donor is C87. Residues 88-89 (GN), N166, N202, and 220-221 (ER) each bind substrate. C229 (proton acceptor) is an active-site residue. 230 to 231 (GT) serves as a coordination point for substrate.

The protein belongs to the diaminopimelate epimerase family. Homodimer.

The protein localises to the cytoplasm. The catalysed reaction is (2S,6S)-2,6-diaminopimelate = meso-2,6-diaminopimelate. Its pathway is amino-acid biosynthesis; L-lysine biosynthesis via DAP pathway; DL-2,6-diaminopimelate from LL-2,6-diaminopimelate: step 1/1. Its function is as follows. Catalyzes the stereoinversion of LL-2,6-diaminopimelate (L,L-DAP) to meso-diaminopimelate (meso-DAP), a precursor of L-lysine and an essential component of the bacterial peptidoglycan. The chain is Diaminopimelate epimerase from Mycobacterium sp. (strain JLS).